A 309-amino-acid chain; its full sequence is Bombesin receptor-activated protein C6orf89 homolog (309 aa).

Residues 1–59 (MGSSLSEPCIYDKLSESIDILRQSGYRYGMSEREIEKFIKQVLETNEPRREPPQFPILR) lie on the Cytoplasmic side of the membrane. The chain crosses the membrane as a helical span at residues 60-80 (ATVKFVVAVGVVLMAVLVFTY). The Extracellular portion of the chain corresponds to 81–309 (PQSPVLMGSV…QDVQCDSAVL (229 aa)).

As to quaternary structure, homodimer.

The protein localises to the golgi apparatus membrane. It localises to the cytoplasm. In terms of biological role, exhibits histone deacetylase (HDAC) enhancer properties. May play a role in progression through the cell cycle. In Danio rerio (Zebrafish), this protein is Bombesin receptor-activated protein C6orf89 homolog.